A 338-amino-acid polypeptide reads, in one-letter code: Sporulation-specific protein 4 (338 aa).

Positions 14–37 are disordered; sequence QEENKNFLHKNTNEPNEMEQSQTQ. Polar residues predominate over residues 22–37; that stretch reads HKNTNEPNEMEQSQTQ.

In terms of biological role, not essential for sporulation. Might be a component of the cell wall. This is Sporulation-specific protein 4 (SPS4) from Saccharomyces cerevisiae (strain ATCC 204508 / S288c) (Baker's yeast).